We begin with the raw amino-acid sequence, 260 residues long: Small ribosomal subunit protein uS2 (260 aa).

The protein belongs to the universal ribosomal protein uS2 family.

In Mesorhizobium japonicum (strain LMG 29417 / CECT 9101 / MAFF 303099) (Mesorhizobium loti (strain MAFF 303099)), this protein is Small ribosomal subunit protein uS2.